The sequence spans 600 residues: Dihydroxy-acid dehydratase (600 aa).

Asp-82 lines the Mg(2+) pocket. Residue Cys-123 participates in [2Fe-2S] cluster binding. Residues Asp-124 and Lys-125 each coordinate Mg(2+). Lys-125 carries the post-translational modification N6-carboxylysine. Cys-192 serves as a coordination point for [2Fe-2S] cluster. Residue Glu-489 coordinates Mg(2+). Residue Ser-515 is the Proton acceptor of the active site.

The protein belongs to the IlvD/Edd family. Homodimer. It depends on [2Fe-2S] cluster as a cofactor. Requires Mg(2+) as cofactor.

It catalyses the reaction (2R)-2,3-dihydroxy-3-methylbutanoate = 3-methyl-2-oxobutanoate + H2O. The enzyme catalyses (2R,3R)-2,3-dihydroxy-3-methylpentanoate = (S)-3-methyl-2-oxopentanoate + H2O. It participates in amino-acid biosynthesis; L-isoleucine biosynthesis; L-isoleucine from 2-oxobutanoate: step 3/4. It functions in the pathway amino-acid biosynthesis; L-valine biosynthesis; L-valine from pyruvate: step 3/4. Functionally, functions in the biosynthesis of branched-chain amino acids. Catalyzes the dehydration of (2R,3R)-2,3-dihydroxy-3-methylpentanoate (2,3-dihydroxy-3-methylvalerate) into 2-oxo-3-methylpentanoate (2-oxo-3-methylvalerate) and of (2R)-2,3-dihydroxy-3-methylbutanoate (2,3-dihydroxyisovalerate) into 2-oxo-3-methylbutanoate (2-oxoisovalerate), the penultimate precursor to L-isoleucine and L-valine, respectively. This chain is Dihydroxy-acid dehydratase, found in Bacteroides fragilis (strain YCH46).